We begin with the raw amino-acid sequence, 254 residues long: MSMEDPFFVVKGEVQKAVNTAQGLFQRWTELLQDPSIATREEIDWTTNELRNNLRSIEWDLEDLDETISIVEANPRKFNLDATELGIRKSFITSTRQVVREMKDQMSNSSMQALAERKNRQALLGESSSQSWSSGPDKYSRLDRELQLANSHFIEEQQAQQQLIVEQQDEQLELVSGSIGVLKNMSQRIGGELEEQAVMLDDFSHELDSTHSRLDNVMKKLAKVSHMTSDRRQWCAIIVLFVILLVVLVLFLVL.

At 1-233 the chain is on the cytoplasmic side; sequence MSMEDPFFVV…VSHMTSDRRQ (233 aa). A coiled-coil region spans residues 46 to 72; sequence TTNELRNNLRSIEWDLEDLDETISIVE. A disordered region spans residues 103–138; it reads KDQMSNSSMQALAERKNRQALLGESSSQSWSSGPDK. A t-SNARE coiled-coil homology domain is found at 162–224; it reads QLIVEQQDEQ…DNVMKKLAKV (63 aa). A helical; Anchor for type IV membrane protein transmembrane segment spans residues 234–254; sequence WCAIIVLFVILLVVLVLFLVL.

Belongs to the syntaxin family.

It localises to the golgi apparatus membrane. Its subcellular location is the golgi apparatus. The protein resides in the trans-Golgi network membrane. The protein localises to the recycling endosome membrane. Functionally, SNARE promoting movement of transport vesicles to target membranes. Targets endosomes to the trans-Golgi network, and may therefore function in retrograde trafficking. Together with SNARE STX12, promotes movement of vesicles from endosomes to the cell membrane, and may therefore function in the endocytic recycling pathway. The protein is Syntaxin-6 (STX6) of Gallus gallus (Chicken).